The sequence spans 32 residues: Cytochrome b6-f complex subunit 7 (32 aa).

A helical membrane pass occupies residues 9-29 (AILSSVLVLVGLAVGFLLLKV).

This sequence belongs to the PetM family. In terms of assembly, the 4 large subunits of the cytochrome b6-f complex are cytochrome b6, subunit IV (17 kDa polypeptide, PetD), cytochrome f and the Rieske protein, while the 4 small subunits are PetG, PetL, PetM and PetN. The complex functions as a dimer.

The protein localises to the plastid. It is found in the chloroplast thylakoid membrane. Component of the cytochrome b6-f complex, which mediates electron transfer between photosystem II (PSII) and photosystem I (PSI), cyclic electron flow around PSI, and state transitions. The polypeptide is Cytochrome b6-f complex subunit 7 (Porphyra purpurea (Red seaweed)).